A 1023-amino-acid chain; its full sequence is Hemolysin, chromosomal (1023 aa).

The next 3 helical transmembrane spans lie at 237 to 259 (IGAG…ILSN), 267 to 326 (KAAA…LSIA), and 364 to 410 (DASL…GILE). N6-myristoyl lysine attachment occurs at residues Lys563 and Lys689. Hemolysin-type calcium-binding repeat units follow at residues 731 to 748 (FGSK…DDHI), 749 to 766 (EGND…NDTL), 767 to 784 (SGGN…NDKL), 785 to 802 (IGGA…DDEL), 815 to 832 (SGGK…ADLL), and 833 to 850 (DGGE…NDIY). Residues 747 to 763 (HIEGNDGNDRLYGDKGN) are compositionally biased toward basic and acidic residues. The disordered stretch occupies residues 747–780 (HIEGNDGNDRLYGDKGNDTLSGGNGDDQLYGGDG).

This sequence belongs to the RTX prokaryotic toxin (TC 1.C.11) family. In terms of processing, myristoylated by HlyC; the toxin only becomes active when modified. Mainly myristoylated, while a minor fraction is acylated with pentadecanoyl (C15:0; 26%) and heptadecanoyl (C17:0; 6%) fatty acyl groups. Fatty acylation is involved in binding to host membranes and promotes the irreversible insertion of Hemolysin into the host cell membrane. Can be activated by both myristoylation and palmitoylation, but HlyC catalyzes lysine myristoylation.

The protein localises to the secreted. It localises to the host cell membrane. In terms of biological role, bacterial hemolysins are exotoxins that attack blood cell membranes and cause cell rupture by forming a pore. In Escherichia coli, this protein is Hemolysin, chromosomal.